A 203-amino-acid chain; its full sequence is Cytochrome c oxidase assembly protein CtaG (203 aa).

At 1 to 19 the chain is on the cytoplasmic side; it reads MDAGKAERRAGNGRRTDGR. The helical; Signal-anchor for type II membrane protein transmembrane segment at 20–42 threads the bilayer; it reads RHLVVAAACAAFIAAMVGVTYAS. Residues 43-203 lie on the Periplasmic side of the membrane; the sequence is VPLYAMFCAL…AAARASGTGG (161 aa).

Belongs to the COX11/CtaG family.

It localises to the cell inner membrane. In terms of biological role, exerts its effect at some terminal stage of cytochrome c oxidase synthesis, probably by being involved in the insertion of the copper B into subunit I. This is Cytochrome c oxidase assembly protein CtaG from Xanthobacter autotrophicus (strain ATCC BAA-1158 / Py2).